Consider the following 103-residue polypeptide: Transcriptional regulator WhiB7 (103 aa).

4 residues coordinate [4Fe-4S] cluster: C17, C49, C52, and C58. One can recognise a 4Fe-4S Wbl-type domain in the interval 25–82 (PCHVGDPDLWFAENPGDLERAKALCAGCPIRVQCLTAALERQEPWGVWGGEILDRGSI). Residues 82–103 (IVARKRPRGRPRKDSGGNPAAA) form a disordered region.

The protein belongs to the WhiB family. The cofactor is [4Fe-4S] cluster. The Fe-S cluster can be nitrosylated by nitric oxide (NO). Post-translationally, upon Fe-S cluster removal intramolecular disulfide bonds are formed.

It localises to the cytoplasm. In terms of biological role, acts as a transcriptional regulator. Probably redox-responsive. The apo- but not holo-form probably binds DNA. Participates in maintaining a reduced cytoplasmic (MSH/MSSM) environment under normal growth conditions and directly or indirectly controls the concentration of mycothiol (MSH + MSSM). In Mycolicibacterium smegmatis (strain ATCC 700084 / mc(2)155) (Mycobacterium smegmatis), this protein is Transcriptional regulator WhiB7 (whiB7).